A 270-amino-acid chain; its full sequence is Glucosamine-6-phosphate deaminase (270 aa).

The active-site Proton acceptor; for enolization step is the Asp68. Residue Asp145 is the For ring-opening step of the active site. His147 acts as the Proton acceptor; for ring-opening step in catalysis. Residue Glu152 is the For ring-opening step of the active site.

Belongs to the glucosamine/galactosamine-6-phosphate isomerase family. NagB subfamily.

The enzyme catalyses alpha-D-glucosamine 6-phosphate + H2O = beta-D-fructose 6-phosphate + NH4(+). It functions in the pathway amino-sugar metabolism; N-acetylneuraminate degradation; D-fructose 6-phosphate from N-acetylneuraminate: step 5/5. Catalyzes the reversible isomerization-deamination of glucosamine 6-phosphate (GlcN6P) to form fructose 6-phosphate (Fru6P) and ammonium ion. This Bifidobacterium longum (strain NCC 2705) protein is Glucosamine-6-phosphate deaminase.